Here is an 873-residue protein sequence, read N- to C-terminus: Envelope glycoprotein B (873 aa).

The first 21 residues, 1 to 21 (MASLKMLICVCVAILIPSTLS), serve as a signal peptide directing secretion. At 22–740 (QDSHGIAGII…SGIASFLSNP (719 aa)) the chain is on the virion surface side. Disulfide bonds link Cys67/Cys525, Cys84/Cys481, Cys157/Cys219, Cys311/Cys359, and Cys548/Cys598. Asn92 and Asn111 each carry an N-linked (GlcNAc...) asparagine; by host glycan. An involved in fusion and/or binding to host membrane region spans residues 124-130 (TWALFSR). Asn201 is a glycosylation site (N-linked (GlcNAc...) asparagine; by host). Positions 206–213 (HQTLGYRT) are involved in fusion and/or binding to host membrane. 2 N-linked (GlcNAc...) asparagine; by host glycosylation sites follow: Asn252 and Asn350. Residues 418–447 (QNHLPRGRERRQAAGRRTASLQSGPQGDRI) are disordered. Residues Asn569, Asn625, and Asn639 are each glycosylated (N-linked (GlcNAc...) asparagine; by host). Hydrophobic membrane proximal region stretches follow at residues 684–738 (IDTV…SFLS) and 715–734 (LGTV…SGIA). A helical transmembrane segment spans residues 741–761 (FAALGIGIAVVVSIILGLLAF). The Intravirion portion of the chain corresponds to 762-873 (KYVMNLKSNP…PSWAEESEDE (112 aa)). The tract at residues 781-807 (PPAGTPPRPSRRYYKDEEEVEEDSDED) is disordered. Acidic residues predominate over residues 796–807 (DEEEVEEDSDED). An Internalization motif motif is present at residues 858 to 861 (YPLL).

The protein belongs to the herpesviridae glycoprotein B family. In terms of assembly, homotrimer; disulfide-linked. Binds to heparan sulfate proteoglycans. Interacts with gH/gL heterodimer. In terms of processing, a proteolytic cleavage by host furin generates two subunits that remain linked by disulfide bonds.

It is found in the virion membrane. The protein resides in the host cell membrane. It localises to the host endosome membrane. Its subcellular location is the host Golgi apparatus membrane. Its function is as follows. Envelope glycoprotein that forms spikes at the surface of virion envelope. Essential for the initial attachment to heparan sulfate moieties of the host cell surface proteoglycans. Involved in fusion of viral and cellular membranes leading to virus entry into the host cell. Following initial binding to its host receptors, membrane fusion is mediated by the fusion machinery composed at least of gB and the heterodimer gH/gL. May be involved in the fusion between the virion envelope and the outer nuclear membrane during virion egress. The protein is Envelope glycoprotein B of Infectious laryngotracheitis virus (strain 632) (ILTV).